The chain runs to 155 residues: MTHPLIPQIIDLATPIAEKLGLEIVEVVFQTNKRPPVLRLDIRNLSSDTGLDDCEQMSRSLEATLDATELIPGSYVLEISSPGISRQLTSDREFIAFKGFEVIVKTYTPYENQKEWRGNLQGRDEQAVYLNKKGRAIAIPRQLVAKVQLNDQRTT.

Belongs to the RimP family.

It localises to the cytoplasm. Functionally, required for maturation of 30S ribosomal subunits. The sequence is that of Ribosome maturation factor RimP from Gloeothece citriformis (strain PCC 7424) (Cyanothece sp. (strain PCC 7424)).